A 302-amino-acid chain; its full sequence is Arginase (302 aa).

Mn(2+)-binding residues include His-103, Asp-126, His-128, and Asp-130. Substrate-binding positions include 128 to 132, 139 to 141, and Asp-180; these read HGDLN and SGN. 2 residues coordinate Mn(2+): Asp-229 and Asp-231. Thr-243 and Glu-274 together coordinate substrate.

Belongs to the arginase family. Requires Mn(2+) as cofactor.

The enzyme catalyses L-arginine + H2O = urea + L-ornithine. It functions in the pathway nitrogen metabolism; urea cycle; L-ornithine and urea from L-arginine: step 1/1. This chain is Arginase (arg), found in Staphylococcus aureus (strain MSSA476).